The following is a 175-amino-acid chain: Putative transmembrane protein ORF175 (175 aa).

Helical transmembrane passes span 14-34 (LGIVYGSTLIILLLPLIGSFM), 58-78 (VLSNFGIFGGLALGVGSAIAF), 101-121 (IVVALLVSQFIFGGWATFALF), and 142-162 (ITPFIDGLIATLGGLMVVLSI).

It localises to the host membrane. This chain is Putative transmembrane protein ORF175, found in Acidianus two-tailed virus (ATV).